We begin with the raw amino-acid sequence, 1478 residues long: Zinc finger protein 518A (1478 aa).

4 C2H2-type zinc fingers span residues 152–174 (FPCEMCSFSASDFQIFKQHRKTH), 209–231 (FQCEECRFFTQDVGTFVQHIHRH), 236–258 (YKCGKCHHLCFTKGELQKHLRVH), and 264–287 (FTCHYCSYGAIHKDQLVRHVITLH). The interval 355-394 (TQTKSEDQSQEQLNEEKGGRQHCEDGDKPIESGSEKATVL) is disordered. A Glycyl lysine isopeptide (Lys-Gly) (interchain with G-Cter in SUMO2) cross-link involves residue K358. Residues 368–388 (NEEKGGRQHCEDGDKPIESGS) are compositionally biased toward basic and acidic residues. Residues K390 and K428 each participate in a glycyl lysine isopeptide (Lys-Gly) (interchain with G-Cter in SUMO2) cross-link. The tract at residues 464 to 484 (PSPALQPNTEKESTANLPPQA) is disordered. K518 participates in a covalent cross-link: Glycyl lysine isopeptide (Lys-Gly) (interchain with G-Cter in SUMO2). S652 carries the phosphoserine modification. The disordered stretch occupies residues 656 to 694 (VCENLQRESSNKTVTQQSTSDSDTTSPLRKESSNSDSLL). The segment covering 670–681 (TQQSTSDSDTTS) has biased composition (low complexity). Glycyl lysine isopeptide (Lys-Gly) (interchain with G-Cter in SUMO2) cross-links involve residues K707, K792, K882, K895, K987, K1008, K1041, K1055, K1078, K1180, and K1441. A C2H2-type 5 zinc finger spans residues 1444–1466 (FNCWFCGRVFDNQDVWAGHGQRH).

Belongs to the krueppel C2H2-type zinc-finger protein family.

It localises to the nucleus. Through its association with the EHMT1-EHMT2/G9A and PRC2/EED-EZH2 histone methyltransferase complexes may function in gene silencing, regulating repressive post-translational methylation of histone tails at promoters of target genes. The protein is Zinc finger protein 518A (Znf518a) of Rattus norvegicus (Rat).